Reading from the N-terminus, the 141-residue chain is Ubiquitin-like protein ATG12 (141 aa).

Residues 1–53 are disordered; it reads MSEDSEVVLQLPSAPVGAGGESLPELSPETATPEPPSSAAVSPGTEEPPGDTK. The segment covering 23-40 has biased composition (low complexity); sequence LPELSPETATPEPPSSAA. G141 is covalently cross-linked (Glycyl lysine isopeptide (Gly-Lys) (interchain with K-? in acceptor protein)).

This sequence belongs to the ATG12 family. As to quaternary structure, forms a conjugate with ATG5. Part of the minor complex composed of 4 sets of ATG12-ATG5 and ATG16L1 (400 kDa); this complex interacts with ATG3 leading to disruption of ATG7 interaction and promotion of ATG8-like proteins lipidation. Forms an 800-kDa complex composed of ATG12-ATG5 and ATG16L2. Interacts with DHX58/RIG-1, IFIH1/MDA5 and MAVS/IPS-1 in monomeric form as well as in ATG12-ATG5 conjugate. The interaction with MAVS is further enhanced upon vesicular stomatitis virus (VSV) infection. Interacts with ATG3; this interaction is essential for phosphatidylethanolamine (PE)-conjugated ATG8-like proteins formation. Interacts with ATG7. Interacts with ATG10. The ATG12-ATG5 conjugate interacts with RAB33A; this interaction is bridged by ATG16L1 and promotes ATG12-ATG5-ATG16L1 complex recruitment to phagophores. Interacts with TECPR1. Interacts with SH3BGRL. The ATG12-ATG5 conjugate interacts with PDCD6IP (via the BRO1 domain); this interaction is bridged by ATG12 and promotes multiple PDCD6IP-mediated functions such as endolysosomal trafficking, macroautophagy and exosome biogenesis. In terms of processing, acetylated by EP300. As to expression, ubiquitous.

The protein resides in the cytoplasm. The protein localises to the preautophagosomal structure membrane. In terms of biological role, ubiquitin-like protein involved in autophagy vesicles formation. Conjugation with ATG5 through a ubiquitin-like conjugating system involving also ATG7 as an E1-like activating enzyme and ATG10 as an E2-like conjugating enzyme, is essential for its function. The ATG12-ATG5 conjugate acts as an E3-like enzyme which is required for lipidation of ATG8 family proteins and their association to the vesicle membranes. As part of the ATG8 conjugation system with ATG5 and ATG16L1, required for recruitment of LRRK2 to stressed lysosomes and induction of LRRK2 kinase activity in response to lysosomal stress. (Microbial infection) May act as a proviral factor. In association with ATG5, negatively regulates the innate antiviral immune response by impairing the type I IFN production pathway upon vesicular stomatitis virus (VSV) infection. The chain is Ubiquitin-like protein ATG12 from Mus musculus (Mouse).